The sequence spans 454 residues: tRNA modification GTPase MnmE (454 aa).

Arg23, Glu80, and Lys120 together coordinate (6S)-5-formyl-5,6,7,8-tetrahydrofolate. Residues 216 to 377 (GMKVVIAGRP…LRNHLKQSMG (162 aa)) form the TrmE-type G domain. Asn226 contacts K(+). GTP-binding positions include 226-231 (NAGKSS), 245-251 (TDIAGTT), 270-273 (DTAG), 335-338 (NKAD), and 358-360 (SAR). Residue Ser230 coordinates Mg(2+). The K(+) site is built by Thr245, Ile247, and Thr250. Thr251 contributes to the Mg(2+) binding site. Residue Lys454 participates in (6S)-5-formyl-5,6,7,8-tetrahydrofolate binding.

The protein belongs to the TRAFAC class TrmE-Era-EngA-EngB-Septin-like GTPase superfamily. TrmE GTPase family. As to quaternary structure, homodimer. Heterotetramer of two MnmE and two MnmG subunits. Requires K(+) as cofactor.

It is found in the cytoplasm. In terms of biological role, exhibits a very high intrinsic GTPase hydrolysis rate. Involved in the addition of a carboxymethylaminomethyl (cmnm) group at the wobble position (U34) of certain tRNAs, forming tRNA-cmnm(5)s(2)U34. This chain is tRNA modification GTPase MnmE, found in Escherichia coli O6:K15:H31 (strain 536 / UPEC).